Reading from the N-terminus, the 257-residue chain is Imidazole glycerol phosphate synthase subunit HisF (257 aa).

Residues Asp11 and Asp130 contribute to the active site.

This sequence belongs to the HisA/HisF family. As to quaternary structure, heterodimer of HisH and HisF.

Its subcellular location is the cytoplasm. It catalyses the reaction 5-[(5-phospho-1-deoxy-D-ribulos-1-ylimino)methylamino]-1-(5-phospho-beta-D-ribosyl)imidazole-4-carboxamide + L-glutamine = D-erythro-1-(imidazol-4-yl)glycerol 3-phosphate + 5-amino-1-(5-phospho-beta-D-ribosyl)imidazole-4-carboxamide + L-glutamate + H(+). The protein operates within amino-acid biosynthesis; L-histidine biosynthesis; L-histidine from 5-phospho-alpha-D-ribose 1-diphosphate: step 5/9. Functionally, IGPS catalyzes the conversion of PRFAR and glutamine to IGP, AICAR and glutamate. The HisF subunit catalyzes the cyclization activity that produces IGP and AICAR from PRFAR using the ammonia provided by the HisH subunit. In Aeromonas hydrophila subsp. hydrophila (strain ATCC 7966 / DSM 30187 / BCRC 13018 / CCUG 14551 / JCM 1027 / KCTC 2358 / NCIMB 9240 / NCTC 8049), this protein is Imidazole glycerol phosphate synthase subunit HisF.